The primary structure comprises 551 residues: Medium/long-chain-fatty-acid--CoA/3-oxocholest-4-en-26-oate--CoA ligase (551 aa).

Residues 172 to 180 (TGGTTGFPK), D417, R432, and K523 contribute to the ATP site.

The protein belongs to the ATP-dependent AMP-binding enzyme family.

The enzyme catalyses a medium-chain fatty acid + ATP + CoA = a medium-chain fatty acyl-CoA + AMP + diphosphate. It carries out the reaction a long-chain fatty acid + ATP + CoA = a long-chain fatty acyl-CoA + AMP + diphosphate. The catalysed reaction is (25S)-3-oxocholest-4-en-26-oate + ATP + CoA = (25S)-3-oxocholest-4-en-26-oyl-CoA + AMP + diphosphate. It participates in lipid metabolism; fatty acid biosynthesis. The protein operates within steroid metabolism; cholesterol metabolism. In terms of biological role, plays an essential role in degradation of the side chains of C-24 branched-chain sterols. Not essential for degradation of straight chain sterols such as cholesterol. Catalyzes the activation of medium/long-chain fatty acids as acyl-coenzyme A (acyl-CoA), which are then transferred to the multifunctional polyketide synthase (PKS) type III for further chain extension. May be involved in the degradation of cholesterol via the degradation of the side chains of C-24 branched-chain sterols. The chain is Medium/long-chain-fatty-acid--CoA/3-oxocholest-4-en-26-oate--CoA ligase from Mycolicibacterium smegmatis (strain ATCC 700084 / mc(2)155) (Mycobacterium smegmatis).